Reading from the N-terminus, the 244-residue chain is MLALVCSCLLLAALPADTWSGPAAVELGSDTVEQIRDTHAKVTEIWQALTQQRAAQGEPAGALHAVCRVQPSATLDAAQPRVSGLVVFRQLGPGAQLEAFFDLEGFPVEANLSSRAIHVHQFGDLSQGCDSTGAHYNPLAVQHPQHPGDFGNFAVRDGRLWKYRSGLAASLAGPHSIVGRAVVVHAGEDDLGRGGNAASVENGNAGPRLACCVVGASGPAPWARQAQEHAERKKRRRESECKAA.

A signal peptide spans 1–18; it reads MLALVCSCLLLAALPADT. Cystine bridges form between Cys67–Cys212 and Cys129–Cys211. N-linked (GlcNAc...) asparagine glycosylation occurs at Asn111. Cu cation-binding residues include His118, His120, and His135. Residues His135, His143, His146, and Asp149 each contribute to the Zn(2+) site. His185 serves as a coordination point for Cu cation. A disordered region spans residues 221-244; it reads PWARQAQEHAERKKRRRESECKAA. Residues 226-244 show a composition bias toward basic and acidic residues; it reads AQEHAERKKRRRESECKAA.

This sequence belongs to the Cu-Zn superoxide dismutase family. As to quaternary structure, homotetramer. Directly interacts with ATP7A; this interaction is copper-dependent and is required for SOD3 activity. Requires Cu cation as cofactor. The cofactor is Zn(2+).

The protein localises to the secreted. It localises to the extracellular space. The protein resides in the golgi apparatus. It is found in the trans-Golgi network. The enzyme catalyses 2 superoxide + 2 H(+) = H2O2 + O2. Its function is as follows. Protect the extracellular space from toxic effect of reactive oxygen intermediates by converting superoxide radicals into hydrogen peroxide and oxygen. This Oryctolagus cuniculus (Rabbit) protein is Extracellular superoxide dismutase [Cu-Zn] (SOD3).